A 436-amino-acid polypeptide reads, in one-letter code: Adenosylmethionine-8-amino-7-oxononanoate aminotransferase (436 aa).

Residue Trp66 coordinates substrate. Residue 126–127 (GS) participates in pyridoxal 5'-phosphate binding. Tyr159 serves as a coordination point for substrate. Asp256 is a binding site for pyridoxal 5'-phosphate. Substrate is bound by residues Lys285 and Gly318. Residue Lys285 is modified to N6-(pyridoxal phosphate)lysine. 319–320 (PT) is a pyridoxal 5'-phosphate binding site. Arg402 contributes to the substrate binding site.

The protein belongs to the class-III pyridoxal-phosphate-dependent aminotransferase family. BioA subfamily. As to quaternary structure, homodimer. Requires pyridoxal 5'-phosphate as cofactor.

The protein localises to the cytoplasm. The catalysed reaction is (8S)-8-amino-7-oxononanoate + S-adenosyl-L-methionine = S-adenosyl-4-methylsulfanyl-2-oxobutanoate + (7R,8S)-7,8-diammoniononanoate. Its pathway is cofactor biosynthesis; biotin biosynthesis; 7,8-diaminononanoate from 8-amino-7-oxononanoate (SAM route): step 1/1. In terms of biological role, catalyzes the transfer of the alpha-amino group from S-adenosyl-L-methionine (SAM) to 7-keto-8-aminopelargonic acid (KAPA) to form 7,8-diaminopelargonic acid (DAPA). It is the only aminotransferase known to utilize SAM as an amino donor. The protein is Adenosylmethionine-8-amino-7-oxononanoate aminotransferase of Mycobacterium leprae (strain TN).